A 489-amino-acid polypeptide reads, in one-letter code: Glycogen synthase (489 aa).

Residue K15 coordinates ADP-alpha-D-glucose.

It belongs to the glycosyltransferase 1 family. Bacterial/plant glycogen synthase subfamily.

The catalysed reaction is [(1-&gt;4)-alpha-D-glucosyl](n) + ADP-alpha-D-glucose = [(1-&gt;4)-alpha-D-glucosyl](n+1) + ADP + H(+). Its pathway is glycan biosynthesis; glycogen biosynthesis. Functionally, synthesizes alpha-1,4-glucan chains using ADP-glucose. This is Glycogen synthase from Francisella tularensis subsp. mediasiatica (strain FSC147).